Consider the following 448-residue polypeptide: Solute carrier family 52, riboflavin transporter, member 3-A (448 aa).

The next 3 membrane-spanning stretches (helical) occupy residues 11 to 31 (AFGLGSWVSINGLWVELPLIV), 40 to 60 (LPSYLTVIIQFANLGPLLVTL), and 73 to 93 (LAIYAVLSIGVVACILLAVFW). N-linked (GlcNAc...) asparagine glycosylation is present at Asn94. The next 2 membrane-spanning stretches (helical) occupy residues 107–127 (AFFILTFFLALVDCTSSVTFL) and 138–158 (ITTYFIGEGLSGLVPGLVALA). Residues Asn168, Asn171, Asn175, and Asn194 are each glycosylated (N-linked (GlcNAc...) asparagine). Transmembrane regions (helical) follow at residues 198 to 218 (EIFFSFLAVMTTISLGAFLIL), 280 to 300 (AFIYVMVLWVNSATNGLLPSV), 315 to 335 (LSAALSAVANPVACIIAMFFP), 339 to 359 (LVFLGILCLLGSTFGGYNMAM), 376 to 396 (AIIVLSWVFFTGLLSYVKVMV), and 407 to 427 (ALVWCGAAVQTGSLLGSIIMF).

Belongs to the riboflavin transporter family.

The protein localises to the cell membrane. It catalyses the reaction riboflavin(in) = riboflavin(out). Plasma membrane transporter mediating the uptake by cells of the water soluble vitamin B2/riboflavin that plays a key role in biochemical oxidation-reduction reactions of the carbohydrate, lipid, and amino acid metabolism. This chain is Solute carrier family 52, riboflavin transporter, member 3-A (slc52a3a), found in Danio rerio (Zebrafish).